A 557-amino-acid chain; its full sequence is CTP synthase (557 aa).

The segment at 1–270 (MTKYVFVTGG…DAIICEELKL (270 aa)) is amidoligase domain. Ser13 is a binding site for CTP. A UTP-binding site is contributed by Ser13. ATP-binding positions include 14 to 19 (SLGKGI) and Asp71. Mg(2+)-binding residues include Asp71 and Glu144. Residues 151–153 (DIE), 191–196 (KTKPTQ), and Lys227 contribute to the CTP site. UTP contacts are provided by residues 191–196 (KTKPTQ) and Lys227. Positions 295 to 547 (TIGMVGKYVD…VEAALAHQQS (253 aa)) constitute a Glutamine amidotransferase type-1 domain. Gly356 is an L-glutamine binding site. Cys383 serves as the catalytic Nucleophile; for glutamine hydrolysis. L-glutamine contacts are provided by residues 384–387 (LGMQ), Glu407, and Arg473. Active-site residues include His520 and Glu522.

Belongs to the CTP synthase family. As to quaternary structure, homotetramer.

It carries out the reaction UTP + L-glutamine + ATP + H2O = CTP + L-glutamate + ADP + phosphate + 2 H(+). It catalyses the reaction L-glutamine + H2O = L-glutamate + NH4(+). The enzyme catalyses UTP + NH4(+) + ATP = CTP + ADP + phosphate + 2 H(+). Its pathway is pyrimidine metabolism; CTP biosynthesis via de novo pathway; CTP from UDP: step 2/2. With respect to regulation, allosterically activated by GTP, when glutamine is the substrate; GTP has no effect on the reaction when ammonia is the substrate. The allosteric effector GTP functions by stabilizing the protein conformation that binds the tetrahedral intermediate(s) formed during glutamine hydrolysis. Inhibited by the product CTP, via allosteric rather than competitive inhibition. Functionally, catalyzes the ATP-dependent amination of UTP to CTP with either L-glutamine or ammonia as the source of nitrogen. Regulates intracellular CTP levels through interactions with the four ribonucleotide triphosphates. This Paraburkholderia xenovorans (strain LB400) protein is CTP synthase.